The primary structure comprises 197 residues: Peptidoglycan-recognition protein 1 (197 aa).

A signal peptide spans 1 to 23; the sequence is MKLATITFFLLTEIFFYISYAEA. 2 cysteine pairs are disulfide-bonded: Cys-31–Cys-154 and Cys-68–Cys-74. The N-acetylmuramoyl-L-alanine amidase domain occupies 53-180; the sequence is KPLERVVIHH…RNVKATKSPG (128 aa).

Belongs to the N-acetylmuramoyl-L-alanine amidase 2 family. As to expression, localizes to plasma (at protein level).

Its subcellular location is the secreted. Functionally, peptidoglycan-recognition protein probably involved in innate immunity by binding to peptidoglycans (PGN) of bacteria and activating the prophenoloxidase (proPO) cascade immune response. Binds to 1,3-beta-D-glucan and PGN. This chain is Peptidoglycan-recognition protein 1 (PGRP-1), found in Holotrichia diomphalia (Korean black chafer).